We begin with the raw amino-acid sequence, 573 residues long: Zinc finger protein 10 (573 aa).

One can recognise a KRAB domain in the interval Val14–Pro85. The C2H2-type 1; atypical zinc finger occupies Asp206–His232. 9 consecutive C2H2-type zinc fingers follow at residues Tyr265–His287, Tyr293–His315, Tyr321–His343, Tyr349–His371, Tyr377–His399, Tyr405–His427, Phe433–His455, Tyr461–His483, and Tyr489–His511. The C2H2-type 11; atypical zinc-finger motif lies at Tyr517 to His539.

Belongs to the krueppel C2H2-type zinc-finger protein family. In terms of assembly, interacts (via the KRAB domain) with TRIM28 (via the RBCC domain).

Its subcellular location is the nucleus. May be involved in transcriptional regulation. The sequence is that of Zinc finger protein 10 (ZNF10) from Homo sapiens (Human).